A 226-amino-acid polypeptide reads, in one-letter code: Glutathione peroxidase 3 (226 aa).

Positions 1–24 (MARLLQASCLLSLLLAGFVPQSRG) are cleaved as a signal peptide. U73 is a catalytic residue. U73 is a non-standard amino acid (selenocysteine).

This sequence belongs to the glutathione peroxidase family. Homotetramer. Secreted in plasma.

Its subcellular location is the secreted. It catalyses the reaction 2 glutathione + H2O2 = glutathione disulfide + 2 H2O. The catalysed reaction is tert-butyl hydroperoxide + 2 glutathione = tert-butanol + glutathione disulfide + H2O. Functionally, protects cells and enzymes from oxidative damage, by catalyzing the reduction of hydrogen peroxide, lipid peroxides and organic hydroperoxide, by glutathione. This chain is Glutathione peroxidase 3, found in Hylobates lar (Lar gibbon).